A 510-amino-acid polypeptide reads, in one-letter code: ATP synthase subunit alpha (510 aa).

170–177 (GDRQTGKT) lines the ATP pocket.

The protein belongs to the ATPase alpha/beta chains family. In terms of assembly, F-type ATPases have 2 components, CF(1) - the catalytic core - and CF(0) - the membrane proton channel. CF(1) has five subunits: alpha(3), beta(3), gamma(1), delta(1), epsilon(1). CF(0) has three main subunits: a(1), b(2) and c(9-12). The alpha and beta chains form an alternating ring which encloses part of the gamma chain. CF(1) is attached to CF(0) by a central stalk formed by the gamma and epsilon chains, while a peripheral stalk is formed by the delta and b chains.

The protein localises to the cell inner membrane. It carries out the reaction ATP + H2O + 4 H(+)(in) = ADP + phosphate + 5 H(+)(out). Produces ATP from ADP in the presence of a proton gradient across the membrane. The alpha chain is a regulatory subunit. In Acidiphilium cryptum (strain JF-5), this protein is ATP synthase subunit alpha.